The following is a 377-amino-acid chain: Palmitoyltransferase PFA3 (377 aa).

Residues 1-31 (MATNNNNNNGNPILRSLETSCCFLATLFPKV) are Cytoplasmic-facing. A helical membrane pass occupies residues 32–52 (FCTLVLTWSLYVLLFIIPNYI). Residues 53–62 (KSSLNSTILN) are Lumenal-facing. Residues 63–83 (IIGITLYVLCIISYYKIILIG) form a helical membrane-spanning segment. The Cytoplasmic portion of the chain corresponds to 84–181 (PGSPLDYPEL…STCIGFHNYK (98 aa)). The region spanning 138–188 (RYCTKCSVWKPDRSHHCSSSGKCILKMDHYCPWFSTCIGFHNYKFFIQFLS) is the DHHC domain. The active-site S-palmitoyl cysteine intermediate is the Cys-168. A helical transmembrane segment spans residues 182-202 (FFIQFLSYVAIYCWFLFIISG). The Lumenal portion of the chain corresponds to 203-222 (KILYNFITEGLFEDEILSLN). Residues 223-243 (LVAVLILSFAFAIAVSVFAMF) traverse the membrane as a helical segment. Topologically, residues 244–377 (SIYLCCKNLT…LRRERQANIV (134 aa)) are cytoplasmic.

It belongs to the DHHC palmitoyltransferase family. PFA3 subfamily. Post-translationally, autopalmitoylated.

It localises to the vacuole membrane. The enzyme catalyses L-cysteinyl-[protein] + hexadecanoyl-CoA = S-hexadecanoyl-L-cysteinyl-[protein] + CoA. Palmitoyltransferase specific for VAC8. Palmitoylates VAC8 at one or more of its N-terminal cysteine residues, which is required for its proper membrane localization. The sequence is that of Palmitoyltransferase PFA3 (PFA3) from Candida albicans (strain SC5314 / ATCC MYA-2876) (Yeast).